The sequence spans 759 residues: uncharacterized protein (759 aa).

One can recognise an MCM domain in the interval 352 to 556; it reads VIQKLSDYAF…KDEDIADFSI (205 aa). Residue 397–404 coordinates ATP; the sequence is SDPGVGKS.

Belongs to the MCM family.

This is an uncharacterized protein from Methanocaldococcus jannaschii (strain ATCC 43067 / DSM 2661 / JAL-1 / JCM 10045 / NBRC 100440) (Methanococcus jannaschii).